Reading from the N-terminus, the 213-residue chain is Protein arginine N-methyltransferase SFM1 (213 aa).

Serine 204 and serine 207 each carry phosphoserine.

Belongs to the class IV-like SAM-binding methyltransferase superfamily. Protein arginine N-methyltransferase SFM1 family.

The protein localises to the cytoplasm. Functionally, S-adenosyl-L-methionine-dependent protein-arginine N-methyltransferase that monomethylates ribosomal protein S3 (RPS3) at 'Arg-146'. The protein is Protein arginine N-methyltransferase SFM1 of Saccharomyces cerevisiae (strain ATCC 204508 / S288c) (Baker's yeast).